Here is a 432-residue protein sequence, read N- to C-terminus: MSNVGKPRTAQEIQQDWDTNPRWNGITRDYTADQVADLQGSVIEEHTLARRGSEILWDAVTQEGDGYINALGALTGNQAVQQVRAGLKAVYLSGWQVAGDANLSGHTYPDQSLYPANSVPSVVRRINNALLRSDEIARTEGDTSVDNWVVPIVADGEAGFGGALNVYELQKAMIAAGAAGTHWEDQLASEKKCGHLGGKVLIPTQQHIRTLNSARLAADVANTPTVVIARTDAEAATLITSDVDERDQPFITGERTAEGYYHVKNGLEPCIARAKSYAPYADMIWMETGTPDLELAKKFAEGVRSEFPDQLLSYNCSPSFNWSAHLEADEIAKFQKELGAMGFKFQFITLAGFHSLNYGMFDLAYGYAREGMTSFVDLQNREFKAAEERGFTAVKHQREVGAGYFDQIATTVDPNSSTTALKGSTEEGQFHN.

A disordered region spans residues 1-24 (MSNVGKPRTAQEIQQDWDTNPRWN). A compositionally biased stretch (polar residues) spans 11–22 (QEIQQDWDTNPR). Position 93–95 (93–95 (SGW)) interacts with substrate. Aspartate 155 contacts Mg(2+). Cysteine 193 (proton acceptor) is an active-site residue. Substrate contacts are provided by residues 194–195 (GH), arginine 230, 315–319 (NCSPS), and threonine 349.

It belongs to the isocitrate lyase/PEP mutase superfamily. Isocitrate lyase family. Homotetramer. It depends on Mg(2+) as a cofactor.

It catalyses the reaction D-threo-isocitrate = glyoxylate + succinate. The protein operates within carbohydrate metabolism; glyoxylate cycle; (S)-malate from isocitrate: step 1/2. With respect to regulation, inhibited by 3-phosphoglycerate, 6-phosphogluconate, phosphoenolpyruvate (PEP), fructose 1,6-bisphosphate, glycolate, oxalate, and itaconate. Involved in the metabolic adaptation in response to environmental changes. Catalyzes the reversible formation of succinate and glyoxylate from isocitrate, a key step of the glyoxylate cycle, which operates as an anaplerotic route for replenishing the tricarboxylic acid cycle during growth on fatty acid substrates. This chain is Isocitrate lyase, found in Corynebacterium glutamicum (strain ATCC 13032 / DSM 20300 / JCM 1318 / BCRC 11384 / CCUG 27702 / LMG 3730 / NBRC 12168 / NCIMB 10025 / NRRL B-2784 / 534).